Consider the following 529-residue polypeptide: Probable anion transporter 1, chloroplastic (529 aa).

The transit peptide at Met1–Arg55 directs the protein to the chloroplast. 2 disordered regions span residues Val13–Gly39 and Thr52–Gly78. The span at Pro28–Gly39 shows a compositional bias: gly residues. Residues Arg67–Gly76 show a composition bias toward basic and acidic residues. 11 helical membrane passes run Trp120–Met140, Val158–Ile178, Thr187–Ala207, Leu209–Met229, Leu251–Ile271, Phe274–Trp294, Val340–Trp360, Leu378–Ala398, Ile418–Met438, Ala469–Ala489, and Val503–Thr523.

Belongs to the major facilitator superfamily. Sodium/anion cotransporter (TC 2.A.1.14) family.

It localises to the plastid. The protein resides in the chloroplast membrane. In terms of biological role, probable anion transporter. The polypeptide is Probable anion transporter 1, chloroplastic (PHT4;1) (Oryza sativa subsp. japonica (Rice)).